The chain runs to 544 residues: Homeobox protein B-H1 (544 aa).

A compositionally biased stretch (low complexity) spans 53–70 (STTTMSSGGSTTTASGIG). Disordered stretches follow at residues 53–73 (STTTMSSGGSTTTASGIGKPN), 92–179 (YKQQ…PPTA), 236–308 (GGVG…AFTD), and 471–544 (AANP…QIQV). A compositionally biased stretch (basic residues) spans 95-105 (QQHHQQLHHHN). A compositionally biased stretch (low complexity) spans 106–131 (NNNNSGSSGGSSPAHSNNNNNINGDN). Residues 156–172 (THPHTHPHALMHPHGKL) show a composition bias toward basic residues. A compositionally biased stretch (acidic residues) spans 247–262 (DLDDSSDYHEENEDCD). Residues 266–282 (MDDHSVCSNGGKDDDGN) show a composition bias toward basic and acidic residues. Over residues 283–293 (SVKSGSTSDMS) the composition is skewed to polar residues. A DNA-binding region (homeobox) is located at residues 299–358 (QRKARTAFTDHQLQTLEKSFERQKYLSVQERQELAHKLDLSDCQVKTWYQNRRTKWKRQT). Residues 476–485 (GPHPVAPPPS) are compositionally biased toward pro residues. Low complexity predominate over residues 492–506 (PSGLVKPIPAHSASA). The segment covering 507–516 (SPPPRPPSTP) has biased composition (pro residues).

This sequence belongs to the Antp homeobox family. B-H1 and B-H2 are abundant in the eye-antenna imaginal disk. Expressed in R1 and R6 cells throughout larval stage until 30 hours after puparium formation, at which time expression is seen in the anterior and posterior primary pigment cells. Coexpressed in embryonic glial cells, neurons of the CNS and PNS, most latitudinal anterior cells of the developing notum and the central circular region of the leg and antennal imaginal disk throughout larval development.

Its subcellular location is the nucleus. In terms of biological role, B-H1 and B-H2 are regulated by members of the wg signaling pathway; wg and dpp. B-H1 and B-H2 are coexpressed and functionally required in R1 and R6 receptor cells and primary pigment cells for normal eye development. Coexpression is also required for the fate determination of external sensory organs, formation of notal microchaetae, formation of presutural macrochaetae, antennal development and for distal leg morphogenesis; segmentation and specification of tarsal segments 3-5. The polypeptide is Homeobox protein B-H1 (B-H1) (Drosophila melanogaster (Fruit fly)).